The sequence spans 60 residues: Large ribosomal subunit protein bL32 (60 aa).

Positions 1–20 (MAKPARHTSKAKRNKRRTHY) are enriched in basic residues. The segment at 1-22 (MAKPARHTSKAKRNKRRTHYKL) is disordered.

This sequence belongs to the bacterial ribosomal protein bL32 family.

The chain is Large ribosomal subunit protein bL32 from Streptococcus agalactiae serotype V (strain ATCC BAA-611 / 2603 V/R).